The primary structure comprises 80 residues: Sec-independent protein translocase protein TatA (80 aa).

The chain crosses the membrane as a helical span at residues 1–21; it reads MGQIGIWQILIIALVILVLFG. The tract at residues 38-80 is disordered; that stretch reads SFKKGLNEEDKPAEPAAKIEGPSHEAKPAGEAAKDPRPADKQG. Positions 58–80 are enriched in basic and acidic residues; the sequence is GPSHEAKPAGEAAKDPRPADKQG.

It belongs to the TatA/E family. As to quaternary structure, the Tat system comprises two distinct complexes: a TatABC complex, containing multiple copies of TatA, TatB and TatC subunits, and a separate TatA complex, containing only TatA subunits. Substrates initially bind to the TatABC complex, which probably triggers association of the separate TatA complex to form the active translocon.

It localises to the cell inner membrane. Functionally, part of the twin-arginine translocation (Tat) system that transports large folded proteins containing a characteristic twin-arginine motif in their signal peptide across membranes. TatA could form the protein-conducting channel of the Tat system. This chain is Sec-independent protein translocase protein TatA, found in Erythrobacter litoralis (strain HTCC2594).